Consider the following 199-residue polypeptide: Large ribosomal subunit protein mL51 (199 aa).

The transit peptide at 1 to 15 directs the protein to the mitochondrion; it reads MNSASISRLTSVIRT.

Belongs to the mitochondrion-specific ribosomal protein mL51 family. As to quaternary structure, component of the mitochondrial ribosome large subunit (39S) which comprises a 16S rRNA and about 50 distinct proteins.

Its subcellular location is the mitochondrion. This chain is Large ribosomal subunit protein mL51 (mrpl-51), found in Caenorhabditis briggsae.